Reading from the N-terminus, the 110-residue chain is Large ribosomal subunit protein uL22 (110 aa).

It belongs to the universal ribosomal protein uL22 family. In terms of assembly, part of the 50S ribosomal subunit.

Its function is as follows. This protein binds specifically to 23S rRNA; its binding is stimulated by other ribosomal proteins, e.g. L4, L17, and L20. It is important during the early stages of 50S assembly. It makes multiple contacts with different domains of the 23S rRNA in the assembled 50S subunit and ribosome. The globular domain of the protein is located near the polypeptide exit tunnel on the outside of the subunit, while an extended beta-hairpin is found that lines the wall of the exit tunnel in the center of the 70S ribosome. This Stutzerimonas stutzeri (strain A1501) (Pseudomonas stutzeri) protein is Large ribosomal subunit protein uL22.